The sequence spans 510 residues: Anaerobic nitric oxide reductase transcription regulator NorR (510 aa).

In terms of domain architecture, Sigma-54 factor interaction spans 188-417; the sequence is IIGNSQGMRT…LEHVIKRAAV (230 aa). ATP contacts are provided by residues 216–223 and 279–288; these read GETGVGKE and ADGGTLFLDE. Residues 486–505 constitute a DNA-binding region (H-T-H motif); the sequence is WAATARQLELDSGNLHRLAK.

Its pathway is nitrogen metabolism; nitric oxide reduction. Required for the expression of anaerobic nitric oxide (NO) reductase, acts as a transcriptional activator for at least the norVW operon. Activation also requires sigma-54. This is Anaerobic nitric oxide reductase transcription regulator NorR from Vibrio vulnificus (strain YJ016).